A 908-amino-acid polypeptide reads, in one-letter code: Metabotropic glutamate receptor 8 (908 aa).

Residues 1-33 (MVCEGKRLASCPCFFLLTAKFYWILTMMQRTHS) form the signal peptide. Residues 34–583 (QEYAHSIRVD…IIKLEWHSPW (550 aa)) lie on the Extracellular side of the membrane. C64 and C106 are disulfide-bonded. A glycan (N-linked (GlcNAc...) asparagine) is linked at N95. L-glutamate contacts are provided by residues S156, 177–179 (AST), and Y227. Intrachain disulfides connect C246-C534, C369-C384, C424-C431, C516-C535, C520-C538, C541-C553, and C556-C569. A glycan (N-linked (GlcNAc...) asparagine) is linked at N298. D309 is a binding site for L-glutamate. Position 401 (K401) interacts with L-glutamate. N452 and N480 each carry an N-linked (GlcNAc...) asparagine glycan. N565 carries an N-linked (GlcNAc...) asparagine glycan. A helical membrane pass occupies residues 584–608 (AVVPVFIAILGIIATTFVIVTFVRY). The Cytoplasmic segment spans residues 609 to 620 (NDTPIVRASGRE). Residues 621 to 641 (LSYVLLTGIFLCYSITFLMIA) traverse the membrane as a helical segment. At 642 to 647 (APDTII) the chain is on the extracellular side. A helical membrane pass occupies residues 648 to 668 (CSFRRIFLGLGMCFSYAALLT). The Cytoplasmic segment spans residues 669 to 695 (KTNRIHRIFEQGKKSVTAPKFISPASQ). The helical transmembrane segment at 696 to 716 (LVITFSLISVQLLGVFVWFVV) threads the bilayer. The Extracellular segment spans residues 717-746 (DPPHTIIDYGEQRTLDPENARGVLKCDISD). The helical transmembrane segment at 747–768 (LSLICSLGYSILLMVTCTVYAI) threads the bilayer. Residues 769-781 (KTRGVPETFNEAK) are Cytoplasmic-facing. Residues 782–803 (PIGFTMYTTCIIWLAFIPIFFG) form a helical membrane-spanning segment. Topologically, residues 804-818 (TAQSAEKMYIQTTTL) are extracellular. The helical transmembrane segment at 819–843 (TVSMSLSASVSLGMLYMPKVYIIIF) threads the bilayer. The Cytoplasmic segment spans residues 844-908 (HPEQNVQKRK…TYISYSNHSI (65 aa)). K882 participates in a covalent cross-link: Glycyl lysine isopeptide (Lys-Gly) (interchain with G-Cter in SUMO1).

The protein belongs to the G-protein coupled receptor 3 family. Interacts with PICK1. In terms of tissue distribution, prominent expression in olfactory bulb, pontine gray, lateral reticular nucleus of the thalamus, and piriform cortex. Less abundant expression incerebral cortex, hippocampus, cerebellum, and mammillary body.

Its subcellular location is the cell membrane. Its function is as follows. G-protein coupled receptor for glutamate. Ligand binding causes a conformation change that triggers signaling via guanine nucleotide-binding proteins (G proteins) and modulates the activity of down-stream effectors. Signaling inhibits adenylate cyclase activity. The protein is Metabotropic glutamate receptor 8 (Grm8) of Rattus norvegicus (Rat).